Reading from the N-terminus, the 338-residue chain is Heat shock factor 2-binding protein (338 aa).

The tract at residues 1 to 20 (MAATVGDGSGTEEACRNMES) is disordered. Residues 12–126 (EEACRNMESK…LLQQAEYCTQ (115 aa)) are a coiled coil. An interaction with BRME1 region spans residues 18 to 55 (MESKEEFVKVRKKDLERLTTEVMQIRDFLPRILNGELL). An interaction with BRCA2 region spans residues 87 to 338 (ARLETAQADS…EDLRALDCNV (252 aa)).

Interacts (via C-terminus) with BNC1. Associates with HSF2. The interaction seems to occur between the trimerization domain of HSF2 and the N-terminal hydrophilic region of HSF2BP. Interacts (via N-terminus) with BRME1. Interacts with BRCA2 and BRME1; the interactions are direct and allow the formation of a ternary complex. The complex BRME1:HSF2BP:BRCA2 interacts with SPATA22, MEIOB and RAD51. In terms of processing, sumoylated by UBE2I in response to MEKK1-mediated stimuli. Expressed in testis and, to a lesser extent, in lung and muscle.

It is found in the cytoplasm. It localises to the chromosome. Its function is as follows. Meiotic recombination factor component of recombination bridges involved in meiotic double-strand break repair. Modulates the localization of recombinases DMC1:RAD51 to meiotic double-strand break (DSB) sites through the interaction with BRCA2 and its recruitment during meiotic recombination. Indispensable for the DSB repair, homologous synapsis, and crossover formation that are needed for progression past metaphase I, is essential for spermatogenesis and male fertility. Required for proper recombinase recruitment in female meiosis. Inhibits BNC1 transcriptional activity during spermatogenesis, probably by sequestering it in the cytoplasm. May be involved in modulating HSF2 activation in testis. The polypeptide is Heat shock factor 2-binding protein (Mus musculus (Mouse)).